The primary structure comprises 728 residues: Phosphoribosylformylglycinamidine synthase subunit PurL (728 aa).

H42 is an active-site residue. Residues Y45 and K84 each contribute to the ATP site. E86 contacts Mg(2+). Residues S87 to H90 and R109 each bind substrate. The active-site Proton acceptor is the H88. D110 contributes to the Mg(2+) binding site. Substrate is bound at residue Q237. Mg(2+) is bound at residue D265. Residue E309 to Q311 coordinates substrate. ATP-binding residues include D491 and G528. Position 529 (N529) interacts with Mg(2+). S531 provides a ligand contact to substrate.

The protein belongs to the FGAMS family. As to quaternary structure, monomer. Part of the FGAM synthase complex composed of 1 PurL, 1 PurQ and 2 PurS subunits.

It is found in the cytoplasm. It catalyses the reaction N(2)-formyl-N(1)-(5-phospho-beta-D-ribosyl)glycinamide + L-glutamine + ATP + H2O = 2-formamido-N(1)-(5-O-phospho-beta-D-ribosyl)acetamidine + L-glutamate + ADP + phosphate + H(+). It participates in purine metabolism; IMP biosynthesis via de novo pathway; 5-amino-1-(5-phospho-D-ribosyl)imidazole from N(2)-formyl-N(1)-(5-phospho-D-ribosyl)glycinamide: step 1/2. Functionally, part of the phosphoribosylformylglycinamidine synthase complex involved in the purines biosynthetic pathway. Catalyzes the ATP-dependent conversion of formylglycinamide ribonucleotide (FGAR) and glutamine to yield formylglycinamidine ribonucleotide (FGAM) and glutamate. The FGAM synthase complex is composed of three subunits. PurQ produces an ammonia molecule by converting glutamine to glutamate. PurL transfers the ammonia molecule to FGAR to form FGAM in an ATP-dependent manner. PurS interacts with PurQ and PurL and is thought to assist in the transfer of the ammonia molecule from PurQ to PurL. The sequence is that of Phosphoribosylformylglycinamidine synthase subunit PurL from Campylobacter jejuni subsp. jejuni serotype O:23/36 (strain 81-176).